Consider the following 862-residue polypeptide: Switch 2 (862 aa).

Disordered regions lie at residues 13–43 (PCGSFPSSSSLRVSSTQELEPSRKPPKSSLS) and 58–95 (KHESKISKTQVEDFDHNEDDHKRNIKFDEEEVDEDDER). The segment covering 16–27 (SFPSSSSLRVSS) has biased composition (low complexity). Basic and acidic residues predominate over residues 58–84 (KHESKISKTQVEDFDHNEDDHKRNIKF). The segment covering 85–95 (DEEEVDEDDER) has biased composition (acidic residues). The Helicase ATP-binding domain occupies 151-323 (YNLYKNNHGG…FNLFEWVAPG (173 aa)). ATP is bound at residue 164–171 (DDMGLGKT). The short motif at 274–277 (DEAH) is the DEAH box element. The stretch at 274–294 (DEAHRLKNEKSKLYEACLEIK) forms a coiled coil. Residues 532-685 (ALEKLMASWI…VAGKMETRYF (154 aa)) enclose the Helicase C-terminal domain. Residues 782–793 (TTSTSQRLNGDG) are compositionally biased toward polar residues. Residues 782–821 (TTSTSQRLNGDGNSADRKKKKRKGCSEEEDMSSSNREQKR) form a disordered region.

It belongs to the SNF2/RAD54 helicase family.

In terms of biological role, may be involved in early DNA damage response. Probable chromatin remodeling factor. The sequence is that of Switch 2 from Arabidopsis thaliana (Mouse-ear cress).